We begin with the raw amino-acid sequence, 370 residues long: 3-dehydroquinate synthase (370 aa).

NAD(+) contacts are provided by residues 107–111 (GVIGD), 131–132 (TS), lysine 144, and lysine 153. The Zn(2+) site is built by glutamate 186, histidine 249, and histidine 267.

It belongs to the sugar phosphate cyclases superfamily. Dehydroquinate synthase family. Co(2+) serves as cofactor. The cofactor is Zn(2+). NAD(+) is required as a cofactor.

The protein localises to the cytoplasm. It catalyses the reaction 7-phospho-2-dehydro-3-deoxy-D-arabino-heptonate = 3-dehydroquinate + phosphate. It participates in metabolic intermediate biosynthesis; chorismate biosynthesis; chorismate from D-erythrose 4-phosphate and phosphoenolpyruvate: step 2/7. Catalyzes the conversion of 3-deoxy-D-arabino-heptulosonate 7-phosphate (DAHP) to dehydroquinate (DHQ). In Jannaschia sp. (strain CCS1), this protein is 3-dehydroquinate synthase.